We begin with the raw amino-acid sequence, 198 residues long: Alpha1-proteinase inhibitor-degradation deficient protein 37 (198 aa).

The residue at position 79 (serine 79) is a Phosphoserine.

Its subcellular location is the cytoplasm. Its function is as follows. Involved in ER-associated protein degradation (ERAD). The chain is Alpha1-proteinase inhibitor-degradation deficient protein 37 (ADD37) from Saccharomyces cerevisiae (strain ATCC 204508 / S288c) (Baker's yeast).